Reading from the N-terminus, the 259-residue chain is Ribosomal RNA small subunit methyltransferase J (259 aa).

S-adenosyl-L-methionine is bound by residues 101 to 102 (RD), 117 to 118 (ER), 153 to 154 (SS), and Asp-176.

It belongs to the methyltransferase superfamily. RsmJ family.

Its subcellular location is the cytoplasm. The catalysed reaction is guanosine(1516) in 16S rRNA + S-adenosyl-L-methionine = N(2)-methylguanosine(1516) in 16S rRNA + S-adenosyl-L-homocysteine + H(+). Specifically methylates the guanosine in position 1516 of 16S rRNA. The polypeptide is Ribosomal RNA small subunit methyltransferase J (Vibrio vulnificus (strain YJ016)).